The sequence spans 126 residues: Small ribosomal subunit protein uS13 (126 aa).

The interval H92–K126 is disordered.

The protein belongs to the universal ribosomal protein uS13 family. As to quaternary structure, part of the 30S ribosomal subunit. Forms a loose heterodimer with protein S19. Forms two bridges to the 50S subunit in the 70S ribosome.

Located at the top of the head of the 30S subunit, it contacts several helices of the 16S rRNA. In the 70S ribosome it contacts the 23S rRNA (bridge B1a) and protein L5 of the 50S subunit (bridge B1b), connecting the 2 subunits; these bridges are implicated in subunit movement. Contacts the tRNAs in the A and P-sites. The sequence is that of Small ribosomal subunit protein uS13 from Deinococcus geothermalis (strain DSM 11300 / CIP 105573 / AG-3a).